A 325-amino-acid chain; its full sequence is MKKKEIIILCGPTASGKSYLGHEFAKAYNGEIINIDSMQVYKETPIITASPSQIYKTEIPYHLYNFLSITEDFSVIKYLKLAAKKIKEIISRGKLPILIGGTGLYINSLVFGYNNIPDITEDLQKQARELHSKIGNIELWNKLEKLDPLAASKINQNDTQRLIRAYEVFKQSGKSIFCFHTLPKEQILSEFNFKIIFLNPERKFLYKTCEQRLQKIFKEGSIDEIALIKKQLIPQDYLNLKAVGVKEILAYLDGNLTLDDALSATQIRTRRYAKRQVTWFKNQIKDKITLKYSNQEECTKILEIFPHLLIERNLKETQNTAPQCI.

11-18 (GPTASGKS) is a binding site for ATP. 13 to 18 (TASGKS) provides a ligand contact to substrate. 2 interaction with substrate tRNA regions span residues 36-39 (DSMQ) and 160-164 (QRLIR).

It belongs to the IPP transferase family. Monomer. Requires Mg(2+) as cofactor.

The catalysed reaction is adenosine(37) in tRNA + dimethylallyl diphosphate = N(6)-dimethylallyladenosine(37) in tRNA + diphosphate. Catalyzes the transfer of a dimethylallyl group onto the adenine at position 37 in tRNAs that read codons beginning with uridine, leading to the formation of N6-(dimethylallyl)adenosine (i(6)A). In Rickettsia canadensis (strain McKiel), this protein is tRNA dimethylallyltransferase.